The sequence spans 144 residues: MVEVSEEDIRNLAARHQEFQRQAEGLKQQMNMVQASITSCDQATVTINELKTVSAEGKTAETMVPVGFGSFVYAEIKNADKVIVDLGAGFSAEETADEAVETLKRRKEQLTKILEQMSASLTKYIQGMQALEVEAEKLQQPSQA.

This sequence belongs to the prefoldin subunit alpha family. As to quaternary structure, heterohexamer of two alpha and four beta subunits.

The protein localises to the cytoplasm. Molecular chaperone capable of stabilizing a range of proteins. Seems to fulfill an ATP-independent, HSP70-like function in archaeal de novo protein folding. The protein is Prefoldin subunit alpha of Methanosarcina barkeri (strain Fusaro / DSM 804).